The primary structure comprises 277 residues: Cis-3,4-dihydrophenanthrene-3,4-diol dehydrogenase (277 aa).

Residues 10-37 (FLTGGVAGLGRALVKRLVEEGANVTVLD) and aspartate 60 contribute to the NAD(+) site. Serine 143 provides a ligand contact to substrate. The active-site Proton acceptor is tyrosine 156. An NAD(+)-binding site is contributed by lysine 160.

Belongs to the short-chain dehydrogenases/reductases (SDR) family. As to quaternary structure, homotetramer.

The enzyme catalyses (3S,4R)-3,4-dihydrophenanthrene-3,4-diol + NAD(+) = phenanthrene-3,4-diol + NADH + H(+). Its activity is regulated as follows. Inhibited by heavy metal such as Hg(2+) and by p-chloromercuribenzoate. In terms of biological role, involved in the degradation of phenanthrene. Catalyzes the oxidation of cis-phenanthrene dihydrodiol (PDD) to yield phenanthrenediol. It can use either NAD or NADP as electron acceptor, however NAD is preferred to NADP. In Alcaligenes faecalis, this protein is Cis-3,4-dihydrophenanthrene-3,4-diol dehydrogenase (phnB).